The sequence spans 1200 residues: Hyalin (1200 aa).

HYR domains lie at 1–39, 40–123, 124–207, 208–292, 293–376, 377–460, 461–544, 546–629, 630–713, 714–797, 798–881, 882–966, 967–1050, 1051–1133, and 1134–1200; these read SSHNPGQSFTTGTTTTVVYTATDAFANVGQCAFTITVTA, TDTT…NVIE, VDTT…NVIE, VDTT…NVVE, VDTT…TVEE, VDTT…TVIA, VDTT…TISA, VDTT…VINA, VDTT…TIGT, VDTM…TVFA, VDTT…TVTA, QDTT…TVNT, and QDTT…FFSD.

In terms of assembly, homooligomer in presence of calcium. Glycosylated.

It is found in the secreted. It localises to the extracellular space. The protein resides in the extracellular matrix. Major constituent of the hyaline layer. The hyaline layer of echinoderm embryos is an extraembryonic matrix that functions as a substrate for cell adhesion through early development. The chain is Hyalin from Strongylocentrotus purpuratus (Purple sea urchin).